We begin with the raw amino-acid sequence, 634 residues long: Mitochondrial Rho GTPase 1 (634 aa).

The Cytoplasmic segment spans residues 1–604 (MLCCMRICVC…PRSEEDVEGK (604 aa)). The 170-residue stretch at 2-171 (LCCMRICVCG…FFLCQKAVTH (170 aa)) folds into the Miro 1 domain. GTP-binding positions include 11–18 (GDEGTGKS), 60–64 (DTSAV), and 116–119 (NKSD). 2 EF-hand domains span residues 187 to 222 (AAVAALQRIFYLSDKDRDGYLSDKEIKDFQMRCFEK) and 307 to 342 (EGYRFFVNLFLLSDKDNDGGLNDAELASLFAPTPGL). Ca(2+) contacts are provided by Asp-200, Asp-202, Asp-204, Tyr-206, Glu-211, Asp-320, Asp-322, Asp-324, and Glu-331. The segment at 399–419 (NPSTTAALKVTRPRKRRKRPG) is disordered. Residues 409 to 419 (TRPRKRRKRPG) are compositionally biased toward basic residues. In terms of domain architecture, Miro 2 spans 423-589 (RNVVLGHIVG…FVHIAEAAME (167 aa)). GTP is bound by residues 432 to 439 (GAPGSGKS), 468 to 472 (ELPGG), and 538 to 541 (LKAD). The chain crosses the membrane as a helical; Anchor for type IV membrane protein span at residues 605–625 (WMSWGIALGAVVCAGAAAVMI). At 626–634 (WRRVSGSGV) the chain is on the mitochondrial intermembrane side.

It belongs to the mitochondrial Rho GTPase family.

It is found in the mitochondrion outer membrane. Mitochondrial GTPase involved in mitochondrial trafficking. Probably involved in control of anterograde transport of mitochondria and their subcellular distribution. The chain is Mitochondrial Rho GTPase 1 (gem1) from Emericella nidulans (strain FGSC A4 / ATCC 38163 / CBS 112.46 / NRRL 194 / M139) (Aspergillus nidulans).